Reading from the N-terminus, the 112-residue chain is Ig kappa chain V-III region TEPC 124 (112 aa).

A framework-1 region spans residues 1-23 (DIVLTQSPASLAVSLGQRATISC). C23 and C92 form a disulfide bridge. The tract at residues 24–38 (RASZSVNWYGNSFMZ) is complementarity-determining-1. A framework-2 region spans residues 39 to 53 (WYZZKPGZPPKLLIY). The complementarity-determining-2 stretch occupies residues 54–60 (RASNLZS). Residues 61 to 92 (GIPARFSGSGSRTBFTLTIBPVZABDVATYFC) form a framework-3 region. The segment at 93–101 (ZZSBZAPWT) is complementarity-determining-3. The framework-4 stretch occupies residues 102-111 (FGSGTKLEIK).

The protein is Ig kappa chain V-III region TEPC 124 of Mus musculus (Mouse).